A 364-amino-acid chain; its full sequence is Dual-specificity RNA methyltransferase RlmN (364 aa).

The active-site Proton acceptor is the Glu91. A Radical SAM core domain is found at 97–333 (ESDRGTLCIS…VTVRKTRGDD (237 aa)). Cys104 and Cys338 are oxidised to a cystine. [4Fe-4S] cluster is bound by residues Cys111, Cys115, and Cys118. S-adenosyl-L-methionine contacts are provided by residues 164–165 (GE), Ser196, 218–220 (SLH), and Asn295. The active-site S-methylcysteine intermediate is the Cys338.

The protein belongs to the radical SAM superfamily. RlmN family. It depends on [4Fe-4S] cluster as a cofactor.

The protein resides in the cytoplasm. It catalyses the reaction adenosine(2503) in 23S rRNA + 2 reduced [2Fe-2S]-[ferredoxin] + 2 S-adenosyl-L-methionine = 2-methyladenosine(2503) in 23S rRNA + 5'-deoxyadenosine + L-methionine + 2 oxidized [2Fe-2S]-[ferredoxin] + S-adenosyl-L-homocysteine. The enzyme catalyses adenosine(37) in tRNA + 2 reduced [2Fe-2S]-[ferredoxin] + 2 S-adenosyl-L-methionine = 2-methyladenosine(37) in tRNA + 5'-deoxyadenosine + L-methionine + 2 oxidized [2Fe-2S]-[ferredoxin] + S-adenosyl-L-homocysteine. Functionally, specifically methylates position 2 of adenine 2503 in 23S rRNA and position 2 of adenine 37 in tRNAs. m2A2503 modification seems to play a crucial role in the proofreading step occurring at the peptidyl transferase center and thus would serve to optimize ribosomal fidelity. The sequence is that of Dual-specificity RNA methyltransferase RlmN from Neisseria meningitidis serogroup A / serotype 4A (strain DSM 15465 / Z2491).